The following is a 346-amino-acid chain: Magnesium-chelatase 38 kDa subunit (346 aa).

34–41 (GHRGTGKS) contributes to the ATP binding site.

The protein belongs to the Mg-chelatase subunits D/I family.

It carries out the reaction protoporphyrin IX + Mg(2+) + ATP + H2O = Mg-protoporphyrin IX + ADP + phosphate + 3 H(+). It participates in porphyrin-containing compound metabolism; bacteriochlorophyll biosynthesis. Functionally, involved in bacteriochlorophyll biosynthesis; introduces a magnesium ion into protoporphyrin IX to yield Mg-protoporphyrin IX. The polypeptide is Magnesium-chelatase 38 kDa subunit (bchI) (Chlorobaculum parvum (strain DSM 263 / NCIMB 8327) (Chlorobium vibrioforme subsp. thiosulfatophilum)).